We begin with the raw amino-acid sequence, 138 residues long: Ribosome-binding factor A (138 aa).

Belongs to the RbfA family. As to quaternary structure, monomer. Binds 30S ribosomal subunits, but not 50S ribosomal subunits or 70S ribosomes.

Its subcellular location is the cytoplasm. Its function is as follows. One of several proteins that assist in the late maturation steps of the functional core of the 30S ribosomal subunit. Associates with free 30S ribosomal subunits (but not with 30S subunits that are part of 70S ribosomes or polysomes). Required for efficient processing of 16S rRNA. May interact with the 5'-terminal helix region of 16S rRNA. This chain is Ribosome-binding factor A, found in Chromobacterium violaceum (strain ATCC 12472 / DSM 30191 / JCM 1249 / CCUG 213 / NBRC 12614 / NCIMB 9131 / NCTC 9757 / MK).